We begin with the raw amino-acid sequence, 300 residues long: Protein orai (300 aa).

The Cytoplasmic portion of the chain corresponds to Met-1 to Arg-128. Residues Gln-58–Gly-82 are disordered. Over residues Ser-62 to Ala-75 the composition is skewed to gly residues. The helical transmembrane segment at Thr-129 to Tyr-146 threads the bilayer. The Extracellular portion of the chain corresponds to Asp-147–Pro-153. A helical transmembrane segment spans residues Leu-154–Met-174. Over Met-175 to Trp-205 the chain is Cytoplasmic. A helical transmembrane segment spans residues Leu-206 to Val-226. Over Lys-227–Gly-237 the chain is Extracellular. The chain crosses the membrane as a helical span at residues Tyr-238–Ile-258. The Cytoplasmic segment spans residues His-259–Ile-300.

The protein belongs to the Orai family.

It localises to the membrane. Ca(2+) release-activated Ca(2+)-like (CRAC-like) channel subunit which mediates Ca(2+) influx and increase in Ca(2+)-selective current by synergy with the Ca(2+) sensor, stim-1. Required for Ca(2+) and IP3-dependent contractile activity of sheath cells and the spermatheca. Affects brood size and somatic cell function. The protein is Protein orai (orai-1) of Caenorhabditis briggsae.